We begin with the raw amino-acid sequence, 469 residues long: 3-isopropylmalate dehydratase large subunit (469 aa).

3 residues coordinate [4Fe-4S] cluster: cysteine 347, cysteine 408, and cysteine 411.

It belongs to the aconitase/IPM isomerase family. LeuC type 1 subfamily. As to quaternary structure, heterodimer of LeuC and LeuD. [4Fe-4S] cluster is required as a cofactor.

The catalysed reaction is (2R,3S)-3-isopropylmalate = (2S)-2-isopropylmalate. The protein operates within amino-acid biosynthesis; L-leucine biosynthesis; L-leucine from 3-methyl-2-oxobutanoate: step 2/4. Catalyzes the isomerization between 2-isopropylmalate and 3-isopropylmalate, via the formation of 2-isopropylmaleate. The protein is 3-isopropylmalate dehydratase large subunit of Actinobacillus pleuropneumoniae serotype 7 (strain AP76).